The primary structure comprises 197 residues: Protein-S-isoprenylcysteine O-methyltransferase A (197 aa).

A run of 3 helical transmembrane segments spans residues 16 to 36 (MLLS…TIHG), 52 to 72 (ALAM…FPGL), and 81 to 101 (FGLI…ITAG). S-adenosyl-L-methionine contacts are provided by residues 116-119 (HGLV), Tyr124, and 129-132 (HPSY). The chain crosses the membrane as a helical span at residues 140–160 (VGTQVMLCNPVSAVAFAVVVW). Arg166 lines the substrate pocket. Glu170 contributes to the S-adenosyl-L-methionine binding site.

It belongs to the class VI-like SAM-binding methyltransferase superfamily. Isoprenylcysteine carboxyl methyltransferase family. It depends on Zn(2+) as a cofactor. As to expression, expressed primarily in flowers, stems, leaves and roots. Almost not expressed in siliques. Detected in root tips and vascular tissues of roots, cotyledons, petiols, hypocotyls, filaments, pollen grains and the distal and proximal portions of the gynoecium.

It is found in the endoplasmic reticulum membrane. It catalyses the reaction [protein]-C-terminal S-[(2E,6E)-farnesyl]-L-cysteine + S-adenosyl-L-methionine = [protein]-C-terminal S-[(2E,6E)-farnesyl]-L-cysteine methyl ester + S-adenosyl-L-homocysteine. Its activity is regulated as follows. Inhibited by farnesylthioacetic acid (FTAA) and N-acetyl-S-trans, trans-farnesyl-l-cysteine (AFC). In terms of biological role, catalyzes the post-translational methylation of isoprenylated C-terminal cysteine residues, resulting in the modulation of the function of prenylated proteins. Involved in negative regulation of abscisic acid signaling. Carboxyl methylation is a reversible and potentially regulated step in the post-translational modification of prenylated proteins. The polypeptide is Protein-S-isoprenylcysteine O-methyltransferase A (Arabidopsis thaliana (Mouse-ear cress)).